The primary structure comprises 379 residues: Bifunctional enzyme IspD/IspF (379 aa).

Residues 1 to 223 (MTVAVIIVAA…RERKGLTMDV (223 aa)) form a 2-C-methyl-D-erythritol 4-phosphate cytidylyltransferase region. Positions 224–379 (RLGNGYDVHA…SIATVTLIGA (156 aa)) are 2-C-methyl-D-erythritol 2,4-cyclodiphosphate synthase. Asp-230 and His-232 together coordinate a divalent metal cation. Residues 230-232 (DVH) and 256-257 (HS) contribute to the 4-CDP-2-C-methyl-D-erythritol 2-phosphate site. His-264 contacts a divalent metal cation. 4-CDP-2-C-methyl-D-erythritol 2-phosphate contacts are provided by residues 278–280 (DIG), 354–357 (TTSE), Phe-361, and Arg-364.

In the N-terminal section; belongs to the IspD/TarI cytidylyltransferase family. IspD subfamily. The protein in the C-terminal section; belongs to the IspF family. It depends on a divalent metal cation as a cofactor.

The catalysed reaction is 2-C-methyl-D-erythritol 4-phosphate + CTP + H(+) = 4-CDP-2-C-methyl-D-erythritol + diphosphate. It carries out the reaction 4-CDP-2-C-methyl-D-erythritol 2-phosphate = 2-C-methyl-D-erythritol 2,4-cyclic diphosphate + CMP. The protein operates within isoprenoid biosynthesis; isopentenyl diphosphate biosynthesis via DXP pathway; isopentenyl diphosphate from 1-deoxy-D-xylulose 5-phosphate: step 2/6. It functions in the pathway isoprenoid biosynthesis; isopentenyl diphosphate biosynthesis via DXP pathway; isopentenyl diphosphate from 1-deoxy-D-xylulose 5-phosphate: step 4/6. Bifunctional enzyme that catalyzes the formation of 4-diphosphocytidyl-2-C-methyl-D-erythritol from CTP and 2-C-methyl-D-erythritol 4-phosphate (MEP) (IspD), and catalyzes the conversion of 4-diphosphocytidyl-2-C-methyl-D-erythritol 2-phosphate (CDP-ME2P) to 2-C-methyl-D-erythritol 2,4-cyclodiphosphate (ME-CPP) with a corresponding release of cytidine 5-monophosphate (CMP) (IspF). The polypeptide is Bifunctional enzyme IspD/IspF (Rhodobacter capsulatus (strain ATCC BAA-309 / NBRC 16581 / SB1003)).